The sequence spans 210 residues: Cyclin-U1-1 (210 aa).

This sequence belongs to the cyclin family. Cyclin U/P subfamily. As to quaternary structure, interacts with CDKA-1. In terms of tissue distribution, expressed in roots and flowers. Expressed in the shoot apex, leaf primordia and young leaves.

This chain is Cyclin-U1-1 (CYCU1-1), found in Arabidopsis thaliana (Mouse-ear cress).